Consider the following 132-residue polypeptide: Small ribosomal subunit protein uS11 (132 aa).

This sequence belongs to the universal ribosomal protein uS11 family. In terms of assembly, part of the 30S ribosomal subunit.

Located on the platform of the 30S subunit. This chain is Small ribosomal subunit protein uS11, found in Sulfolobus acidocaldarius (strain ATCC 33909 / DSM 639 / JCM 8929 / NBRC 15157 / NCIMB 11770).